The sequence spans 209 residues: Large ribosomal subunit protein uL3 (209 aa).

This sequence belongs to the universal ribosomal protein uL3 family. As to quaternary structure, part of the 50S ribosomal subunit. Forms a cluster with proteins L14 and L19.

One of the primary rRNA binding proteins, it binds directly near the 3'-end of the 23S rRNA, where it nucleates assembly of the 50S subunit. The protein is Large ribosomal subunit protein uL3 of Moorella thermoacetica (strain ATCC 39073 / JCM 9320).